A 116-amino-acid chain; its full sequence is Vitelline membrane protein Vm32E (116 aa).

The first 17 residues, 1–17 (MQIVALTLVAFVAIAGA), serve as a signal peptide directing secretion. The VM domain occupies 36 to 73 (GYPAPPCPTNYLFSCQPNLAPAPCAQEAPAYGSAGAYT).

This sequence belongs to the vitelline membrane family. Sulfated by pip; may be involved in embryo dorsal-ventral axis determination. Sulfation by pip may occur on covalently bound glycosaminoglycans. As to expression, expressed in stage 10 egg-chambers, localized in the outer eggshell (chorion membrane).

The protein resides in the secreted. In terms of biological role, major early eggshell protein. This is Vitelline membrane protein Vm32E from Drosophila melanogaster (Fruit fly).